The chain runs to 499 residues: MSRLQVQEQAVDSEGDSSLYRRDEEGTQSSHRMLGFSDALLSIIATVMILPVTHTEISPEQQFDKSIQKLLATRIAVYLMTFLIVTVAWAAHTRLFQVVGKIDDTLALLNLACMMTITLLPYTFSLMVTFPDVPLGIFLFCMCVIAIGSVQAMIVGYAFHFPHLLNPQIQCSTHRALSRRHILHLVLRGPALCFVAAVFSLFFFPLSYLLMVTVIFLPHISKATTWCKDKFMGHRESPAHNVEPFSIDLHAPLSKERVEAFSDGVYAIVATLLILDICEDNVPDPKDVQQKFSGSLVAALGAYGPQFLAYFGSFATVGLLWFAHHSLFLHVRKATQTMGLFNILSLAFVGGLPLAYQQTSAFARQPRDELERVRVSCAIIFFASIFQFAIWTTALLHQRETLQPAVQFGGQEHAFMFAKLALYPCASLLAFAATCLLSRFSTAIFHLMQIAVPFAFLLLRLLVRLALAGLQVLWDLWPERPQQDQGEPETQSQLLPASC.

Residues methionine 1 to alanine 10 show a composition bias toward polar residues. Residues methionine 1–glycine 26 form a disordered region. Residues methionine 1 to serine 30 are Cytoplasmic-facing. A helical membrane pass occupies residues histidine 31–threonine 53. A RxxxFSD motif 1 motif is present at residues arginine 32 to aspartate 38. At histidine 54 to arginine 74 the chain is on the lumenal side. Residues threonine 55–glutamate 60 form a short helix H1-1 region. The short helix H2-1 stretch occupies residues glutamine 62–glutamine 68. The chain crosses the membrane as a helical span at residues isoleucine 75–glutamine 97. Over valine 98–aspartate 103 the chain is Cytoplasmic. The chain crosses the membrane as a helical span at residues aspartate 104–serine 125. At leucine 126 to leucine 135 the chain is on the lumenal side. Residues glycine 136–tyrosine 157 traverse the membrane as a helical segment. Topologically, residues alanine 158–histidine 181 are cytoplasmic. A helical membrane pass occupies residues isoleucine 182 to phenylalanine 202. At phenylalanine 203 to serine 207 the chain is on the lumenal side. Residues tyrosine 208–cysteine 227 form a helical membrane-spanning segment. Over lysine 228–serine 254 the chain is Cytoplasmic. A helical transmembrane segment spans residues lysine 255–glutamate 279. Positions arginine 257–aspartate 263 match the RxxxFSD motif 2 motif. Residues aspartate 280–glutamine 306 lie on the Lumenal side of the membrane. The interval proline 285–serine 293 is short helix H1-2. Residues serine 295–glycine 301 form a short helix H2-2 region. Residues phenylalanine 307–leucine 329 traverse the membrane as a helical segment. Topologically, residues histidine 330 to threonine 335 are cytoplasmic. Residues glutamine 336–glutamine 357 form a helical membrane-spanning segment. Over glutamine 358–arginine 372 the chain is Lumenal. The chain crosses the membrane as a helical span at residues valine 373–threonine 393. Residues alanine 394–histidine 413 are Cytoplasmic-facing. The chain crosses the membrane as a helical span at residues alanine 414 to leucine 437. The Lumenal portion of the chain corresponds to serine 438–arginine 439. The chain crosses the membrane as a helical span at residues phenylalanine 440–alanine 466. Over leucine 467–cysteine 499 the chain is Cytoplasmic.

The protein belongs to the TMEM175 family. In terms of assembly, homodimer. Interacts with AKT (AKT1, AKT2 or AKT3); leading to formation of the lysoK(GF) complex, which activates the channel. Interacts with LAMP1; inhibiting the proton channel activity of TMEM175. Interacts with LAMP2; inhibiting the proton channel activity of TMEM175.

Its subcellular location is the endosome membrane. It localises to the lysosome membrane. The catalysed reaction is H(+)(in) = H(+)(out). The enzyme catalyses K(+)(in) = K(+)(out). With respect to regulation, active at low pH (under pH 4.6): proton channel activity is activated by luminal side protons. Polyunsaturated fatty acids, such as arachidonic acid, also activate the channel activity. Proton channel activity is directly inhibited by LAMP1 or LAMP2, facilitating lysosomal acidification. Channel activity is activated following interaction with AKT (AKT1, AKT2 or AKT3): interaction promotes activation from closed to an open state. Activation by AKT is independent of AKT serine/threonine-protein kinase activity. Functionally, proton-activated proton channel that catalyzes proton efflux from endosomes and lysosomes to maintain a steady-state pH. Activated at low pH (under pH 4.6) by luminal side protons: selectively mediates lysosomal proton release from lysosomes, eliciting a proton leak that balances V-ATPase activity to maintain pH homeostasis. Regulation of lumenal pH stability is required for autophagosome-lysosome fusion. Also acts as a potassium channel at higher pH, regulating potassium conductance in endosomes and lysosomes. Constitutes the pore-forming subunit of the lysoK(GF) complex, a complex activated by extracellular growth factors. The lysoK(GF) complex is composed of TMEM175 and AKT (AKT1, AKT2 or AKT3), a major target of growth factor receptors: in the complex, TMEM175 channel is opened by conformational changes by AKT, leading to its activation. The lysoK(GF) complex is required to protect neurons against stress-induced damage. The sequence is that of Endosomal/lysosomal proton channel TMEM175 from Rattus norvegicus (Rat).